Reading from the N-terminus, the 188-residue chain is Kappa-casein (188 aa).

An N-terminal signal peptide occupies residues 1–21 (MMKSSFLIVPILALTLPFLGA). O-linked (GalNAc...) threonine glycosylation is found at threonine 143 and threonine 148. A Phosphothreonine modification is found at threonine 163. Serine 167 carries the phosphoserine; alternate modification. An O-linked (GalNAc...) serine; alternate glycan is attached at serine 167. Threonine 184 is a glycosylation site (O-linked (GalNAc...) threonine). Residue serine 185 is modified to Phosphoserine.

It belongs to the kappa-casein family. As to expression, mammary gland specific. Secreted in milk.

The protein resides in the secreted. Functionally, kappa-casein stabilizes micelle formation, preventing casein precipitation in milk. This Sus scrofa (Pig) protein is Kappa-casein (CSN3).